The following is a 198-amino-acid chain: MSPRVGRVERTTKETSVLVEINLDGTGKVDVATGVGFYDHMLDQLGRHGLFDLTVKTEGDLHIDTHHTIEDTALALGAAFKQALGDKVGIYRFGNCTVPLDESLAQVTVDLSGRPYLVHTEPENMAPMIGTYDTTMTRHIFESFVAQAQIALHIHVPYGRNAHHIVECQFKALARALRYASEHDPRAAGILPSTKGAL.

Belongs to the imidazoleglycerol-phosphate dehydratase family.

It is found in the cytoplasm. The enzyme catalyses D-erythro-1-(imidazol-4-yl)glycerol 3-phosphate = 3-(imidazol-4-yl)-2-oxopropyl phosphate + H2O. It participates in amino-acid biosynthesis; L-histidine biosynthesis; L-histidine from 5-phospho-alpha-D-ribose 1-diphosphate: step 6/9. The polypeptide is Imidazoleglycerol-phosphate dehydratase (Streptomyces griseus subsp. griseus (strain JCM 4626 / CBS 651.72 / NBRC 13350 / KCC S-0626 / ISP 5235)).